The following is a 434-amino-acid chain: Homoserine dehydrogenase (434 aa).

The NADPH site is built by threonine 13 and valine 14. Positions 14, 33, and 43 each coordinate NAD(+). Position 14 (valine 14) interacts with NADP(+). Arginine 45 serves as a coordination point for NADPH. Arginine 45, arginine 46, and lysine 103 together coordinate NADP(+). Lysine 103 serves as a coordination point for NADPH. Na(+) is bound by residues glutamate 127, valine 130, glycine 132, and isoleucine 134. The NADP(+) site is built by glycine 185 and glutamate 188. L-homoserine is bound by residues glutamate 188 and aspartate 199. Catalysis depends on lysine 203, which acts as the Proton donor. Residue glycine 300 participates in NADPH binding. Glycine 300 contributes to the NAD(+) binding site. Position 300 (glycine 300) interacts with NADP(+). An ACT domain is found at tyrosine 353–arginine 429.

This sequence belongs to the homoserine dehydrogenase family. It depends on a metal cation as a cofactor.

It carries out the reaction L-homoserine + NADP(+) = L-aspartate 4-semialdehyde + NADPH + H(+). It catalyses the reaction L-homoserine + NAD(+) = L-aspartate 4-semialdehyde + NADH + H(+). It participates in amino-acid biosynthesis; L-methionine biosynthesis via de novo pathway; L-homoserine from L-aspartate: step 3/3. Its pathway is amino-acid biosynthesis; L-threonine biosynthesis; L-threonine from L-aspartate: step 3/5. Its activity is regulated as follows. Feedback inhibition by threonine. Its function is as follows. Catalyzes the conversion of L-aspartate-beta-semialdehyde (L-Asa) to L-homoserine (L-Hse), the third step in the biosynthesis of threonine and methionine from aspartate. The chain is Homoserine dehydrogenase (hom) from Pseudomonas aeruginosa (strain ATCC 15692 / DSM 22644 / CIP 104116 / JCM 14847 / LMG 12228 / 1C / PRS 101 / PAO1).